Consider the following 662-residue polypeptide: Polyunsaturated fatty acid lipoxygenase ALOX15 (662 aa).

The 113-residue stretch at Gly2 to Arg114 folds into the PLAT domain. Residues Thr115–Ile662 enclose the Lipoxygenase domain. 5 residues coordinate Fe cation: His360, His365, His540, His544, and Ile662.

Belongs to the lipoxygenase family. In terms of assembly, interacts with PEBP1; in response to IL13/interleukin-13, prevents the interaction of PEBP1 with RAF1 to activate the ERK signaling cascade. Requires Fe cation as cofactor. In terms of tissue distribution, detected in monocytes and eosinophils (at protein level). Expressed in airway epithelial cells.

It localises to the cytoplasm. The protein localises to the cytosol. It is found in the cell membrane. Its subcellular location is the lipid droplet. It catalyses the reaction (5Z,8Z,11Z,14Z)-eicosatetraenoate + O2 = (12S)-hydroperoxy-(5Z,8Z,10E,14Z)-eicosatetraenoate. The catalysed reaction is (5Z,8Z,11Z,14Z)-eicosatetraenoate + O2 = (15S)-hydroperoxy-(5Z,8Z,11Z,13E)-eicosatetraenoate. It carries out the reaction (9Z,12Z)-octadecadienoate + O2 = (13S)-hydroperoxy-(9Z,11E)-octadecadienoate. The enzyme catalyses (5Z,8Z,11Z,14Z)-eicosatetraenoate + 2 O2 = (14R,15S)-dihydroperoxy-(5Z,8Z,10E,12E)-eicosatetraenoate. It catalyses the reaction (5Z,8Z,11Z,14Z)-eicosatetraenoate + 2 O2 = (8S,15S)-dihydroperoxy-(5Z,9E,11Z,13E)-eicosatetraenoate. The catalysed reaction is (14S,15R)-epoxy-(5Z,8Z,11Z)-eicosatrienoate + O2 = (8S)-hydroperoxy-(14S,15R)-epoxy-(5Z,9E,11Z)-eicosatrienoate. It carries out the reaction (14S,15R)-epoxy-(5Z,8Z,11Z)-eicosatrienoate + O2 = (12S)-hydroperoxy-(14S,15R)-epoxy-(5Z,8Z,10E)-eicosatrienoate. The enzyme catalyses (14R,15S)-epoxy-(5Z,8Z,11Z)-eicosatrienoate + O2 = (5S)-hydroperoxy-(14R,15S)-epoxy-(6E,8Z,11Z)-eicosatrienoate. It catalyses the reaction (14R,15S)-epoxy-(5Z,8Z,11Z)-eicosatrienoate + O2 = (12S)-hydroperoxy-(14R,15S)-epoxy-(5Z,8Z,10E)-eicosatrienoate. The catalysed reaction is (15R)-hydroperoxy-(5Z,8Z,11Z,13E)-eicosatetraenoate = 15-oxo-(5Z,8Z,11Z,13E)-eicosatetraenoate + H2O. It carries out the reaction (15S)-hydroperoxy-(5Z,8Z,11Z,13E)-eicosatetraenoate = (14S,15S)-epoxy-(5Z,8Z,10E,12E)-eicosatetraenoate + H2O. The enzyme catalyses (12S)-hydroperoxy-(5Z,8Z,10E,14Z)-eicosatetraenoate = (8S)-hydroxy-(11S,12S)-epoxy-(5Z,9E,14Z)-eicosatrienoate. It catalyses the reaction (4Z,7Z,10Z,13Z,16Z,19Z)-docosahexaenoate + O2 = (14S)-hydroperoxy-(4Z,7Z,10Z,12E,16Z,19Z)-docosahexaenoate. The catalysed reaction is (4Z,7Z,10Z,13Z,16Z,19Z)-docosahexaenoate + O2 = (17S)-hydroperoxy-(4Z,7Z,10Z,13Z,15E,19Z)-docosahexaenoate. It carries out the reaction (7S)-hydroperoxy-(4Z,8E,10Z,13Z,16Z,19Z)-docosahexaenoate + O2 = (7S,14S)-dihydroperoxy-(4Z,8E,10Z,12E,16Z,19Z)-docosahexaenoate. The enzyme catalyses (7S)-hydroperoxy-(4Z,8E,10Z,13Z,16Z,19Z)-docosahexaenoate + O2 = (7S,17S)-dihydroperoxy-(4Z,8E,10Z,13Z,15E,19Z)-docosahexaenoate. It catalyses the reaction (4Z,7Z,10Z,13Z,16Z,19Z)-docosahexaenoate + O2 = (11S)-hydroperoxy-(4Z,7Z,9E,13Z,16Z,19Z)-docosahexaenoate. The catalysed reaction is (7Z,10Z,13Z,16Z,19Z)-docosapentaenoate + O2 = 14-hydroperoxy-(7Z,10Z,12E,16Z,19Z)-docosapentaenoate. It carries out the reaction (4Z,7Z,10Z,13Z,16Z)-docosapentaenoate + O2 = 14-hydroperoxy-(4Z,7Z,10Z,12E,16Z)-docosapentaenoate. The enzyme catalyses N-(5Z,8Z,11Z,14Z)-eicosatetraenoyl-taurine + O2 = N-(12S)-hydroperoxy-(5Z,8Z,10E,14Z)-eicosatetraenoyl-taurine. It catalyses the reaction N-(5Z,8Z,11Z,14Z)-eicosatetraenoyl-gamma-aminobutanoate + O2 = N-(12S)-hydroperoxy-(5Z,8Z,10E,14Z)-eicosatetraenoyl-gamma-aminobutanoate. The catalysed reaction is N-(5Z,8Z,11Z,14Z)-eicosatetraenoyl-glycine + O2 = N-(12S)-hydroperoxy-(5Z,8Z,10E,14Z)-eicosatetraenoyl-glycine. It carries out the reaction N-(5Z,8Z,11Z,14Z)-eicosatetraenoyl-L-alanine + O2 = N-(12S)-hydroperoxy-(5Z,8Z,10E,14Z)-eicosatetraenoyl-alanine. The enzyme catalyses N-(5Z,8Z,11Z,14Z)-eicosatetraenoyl-taurine + O2 = N-(15S)-hydroperoxy-(5Z,8Z,11Z,13E)-eicosatetraenoyl-taurine. It catalyses the reaction N-(5Z,8Z,11Z,14Z)-eicosatetraenoyl-gamma-aminobutanoate + O2 = N-(15S)-hydroperoxy-(5Z,8Z,11Z,13E)-eicosatetraenoyl-gamma-aminobutanoate. The catalysed reaction is N-(5Z,8Z,11Z,14Z)-eicosatetraenoyl-glycine + O2 = N-(15S)-hydroperoxy-(5Z,8Z,11Z,13E)-eicosatetraenoyl-glycine. It carries out the reaction N-(5Z,8Z,11Z,14Z)-eicosatetraenoyl-L-alanine + O2 = N-(15S)-hydroperoxy-(5Z,8Z,11Z,13E)-eicosatetraenoyl-alanine. It participates in lipid metabolism; hydroperoxy eicosatetraenoic acid biosynthesis. Its activity is regulated as follows. Activity is increased by binding phosphatidylinositol phosphates, especially phosphatidylinositol 3,4-bisphosphate and phosphatidylinositol 4,5-bisphosphate. Inactivated at 37 degrees Celsius by (13S)-hydroperoxy-(9Z,11E)-octadecadienoate. Non-heme iron-containing dioxygenase that catalyzes the stereo-specific peroxidation of free and esterified polyunsaturated fatty acids generating a spectrum of bioactive lipid mediators. It inserts peroxyl groups at C12 or C15 of arachidonate ((5Z,8Z,11Z,14Z)-eicosatetraenoate) producing both 12-hydroperoxyeicosatetraenoate/12-HPETE and 15-hydroperoxyeicosatetraenoate/15-HPETE. It may then act on 12-HPETE to produce hepoxilins, which may show pro-inflammatory properties. Can also peroxidize linoleate ((9Z,12Z)-octadecadienoate) to 13-hydroperoxyoctadecadienoate/13-HPODE. May participate in the sequential oxidations of DHA ((4Z,7Z,10Z,13Z,16Z,19Z)-docosahexaenoate) to generate specialized pro-resolving mediators (SPMs)like resolvin D5 ((7S,17S)-diHPDHA) and (7S,14S)-diHPDHA, that actively down-regulate the immune response and have anti-aggregation properties with platelets. Can convert epoxy fatty acids to hydroperoxy-epoxides derivatives followed by an intramolecular nucleophilic substitution leading to the formation of monocyclic endoperoxides. Plays an important role during the maintenance of self-tolerance by peroxidizing membrane-bound phosphatidylethanolamine which can then signal the sorting process for clearance of apoptotic cells during inflammation and prevent an autoimmune response. In addition to its role in the immune and inflammatory responses, this enzyme may play a role in epithelial wound healing in the cornea through production of lipoxin A4 (LXA(4)) and docosahexaenoic acid-derived neuroprotectin D1 (NPD1; 10R,17S-HDHA), both lipid autacoids exhibit anti-inflammatory and neuroprotective properties. Furthermore, it may regulate actin polymerization which is crucial for several biological processes such as the phagocytosis of apoptotic cells. It is also implicated in the generation of endogenous ligands for peroxisome proliferator activated receptor (PPAR-gamma), hence modulating macrophage development and function. It may also exert a negative effect on skeletal development by regulating bone mass through this pathway. As well as participates in ER stress and downstream inflammation in adipocytes, pancreatic islets, and liver. Finally, it is also involved in the cellular response to IL13/interleukin-13. In Homo sapiens (Human), this protein is Polyunsaturated fatty acid lipoxygenase ALOX15.